A 102-amino-acid polypeptide reads, in one-letter code: Movement protein (102 aa).

The helical transmembrane segment at 43–63 (VVALIVILFAVGIVYLAYTLF) threads the bilayer. Residues 82-102 (IGFGNTPLRRPGEGNPNGGPV) form a disordered region.

Belongs to the mastrevirus movement protein family. In terms of assembly, interacts with the capsid protein (CP). Part of a MP-CP-viral DNA complex.

The protein localises to the host membrane. Involved in the viral transport within, and between cells. The chain is Movement protein from Tobacco yellow dwarf virus (strain Australia) (TYDV).